A 321-amino-acid polypeptide reads, in one-letter code: Phospholipid phosphatase-related protein type 5 (321 aa).

The next 6 membrane-spanning stretches (helical) occupy residues 6–26, 62–82, 122–142, 196–213, 225–245, and 252–272; these read VALI…TVML, AVPP…VIIV, FLGI…AGQV, AALS…ITST, VLCL…VAEY, and VIAG…CVVN.

The protein belongs to the PA-phosphatase related phosphoesterase family.

The protein localises to the cell membrane. Its function is as follows. Induces filopodia formation and promotes neurite growth in a CDC42-independent manner; impedes neurite growth inhibitory-mediated axonal retraction. The polypeptide is Phospholipid phosphatase-related protein type 5 (Mus musculus (Mouse)).